The chain runs to 213 residues: Guanylate kinase (213 aa).

One can recognise a Guanylate kinase-like domain in the interval 6-186 (GLLIILSSPS…TEERLKTIVS (181 aa)). 13 to 20 (SPSGAGKS) contributes to the ATP binding site.

Belongs to the guanylate kinase family.

The protein localises to the cytoplasm. It carries out the reaction GMP + ATP = GDP + ADP. Functionally, essential for recycling GMP and indirectly, cGMP. This chain is Guanylate kinase, found in Ruegeria pomeroyi (strain ATCC 700808 / DSM 15171 / DSS-3) (Silicibacter pomeroyi).